We begin with the raw amino-acid sequence, 658 residues long: Squalene--hopene cyclase (658 aa).

A PFTB 1 repeat occupies 69–110 (EAKIGRYLRRIQGEHGGWSLFYGGDLDLSATVKAYFALKMIG). Catalysis depends on Asp392, which acts as the Proton donor. PFTB repeat units follow at residues 418–459 (KARA…GALL), 486–526 (MKAA…NVAA), and 534–584 (IQKA…GLMA).

The protein belongs to the terpene cyclase/mutase family.

The protein localises to the cell membrane. It catalyses the reaction squalene = hop-22(29)-ene. It carries out the reaction squalene + H2O = hopan-22-ol. It participates in secondary metabolite biosynthesis; hopanoid biosynthesis. Catalyzes the cyclization of squalene into hopene. The protein is Squalene--hopene cyclase (shc) of Zymomonas mobilis subsp. mobilis (strain ATCC 31821 / ZM4 / CP4).